Consider the following 92-residue polypeptide: UPF0223 protein SMU_1141c (92 aa).

This sequence belongs to the UPF0223 family.

The chain is UPF0223 protein SMU_1141c from Streptococcus mutans serotype c (strain ATCC 700610 / UA159).